The sequence spans 159 residues: Thymic stromal lymphopoietin (159 aa).

The N-terminal stretch at 1–28 is a signal peptide; the sequence is MFPFALLYVLSVSFRKIFILQLVGLVLT. Cystine bridges form between Cys34–Cys110, Cys69–Cys75, and Cys90–Cys137. Residue Asn64 is glycosylated (N-linked (GlcNAc...) asparagine). A glycan (N-linked (GlcNAc...) asparagine) is linked at Asn119.

Interacts with a receptor composed of CRLF2 and IL7R. Binding of TSLP to CRLF2/TSLPR is a mechanistic prerequisite for recruitment of IL7R to the high-affinity ternary complex. Isoform 1 is expressed in a number of tissues including heart, liver and prostate. Isoform 2 is the predominant form in keratinocytes of oral mucosa, skin and in salivary glands. It is secreted into saliva.

The protein localises to the secreted. Functionally, cytokine that induces the release of T-cell-attracting chemokines from monocytes and, in particular, enhances the maturation of CD11c(+) dendritic cells. Can induce allergic inflammation by directly activating mast cells. May act as an antimicrobial peptide in the oral cavity and on the skin. The sequence is that of Thymic stromal lymphopoietin (TSLP) from Homo sapiens (Human).